Reading from the N-terminus, the 172-residue chain is General stress protein 18 (172 aa).

Residues 3–171 (KKIAVVLTYY…FNRESLALLE (169 aa)) enclose the PfpI endopeptidase domain. The active-site Nucleophile is the Cys-104. His-105 is an active-site residue.

Belongs to the peptidase C56 family.

Its function is as follows. Functions in the protection against aldehyde-stress, possibly by degrading damaged proteins. This chain is General stress protein 18 (yfkM), found in Bacillus subtilis (strain 168).